The sequence spans 198 residues: Ribonuclease HII 1 (198 aa).

The RNase H type-2 domain occupies 7 to 196; it reads ELTAGVDEAG…VRAALARAAA (190 aa). Aspartate 13, glutamate 14, and aspartate 105 together coordinate a divalent metal cation.

The protein belongs to the RNase HII family. Requires Mn(2+) as cofactor. The cofactor is Mg(2+).

The protein localises to the cytoplasm. It catalyses the reaction Endonucleolytic cleavage to 5'-phosphomonoester.. Functionally, endonuclease that specifically degrades the RNA of RNA-DNA hybrids. This chain is Ribonuclease HII 1, found in Methylibium petroleiphilum (strain ATCC BAA-1232 / LMG 22953 / PM1).